A 303-amino-acid chain; its full sequence is Protoheme IX farnesyltransferase (303 aa).

Transmembrane regions (helical) follow at residues 25 to 45 (MGLVQGNLIPAFAGAWLAIVM), 54 to 74 (IPQILLMLVGSTLIMGGACAL), 118 to 138 (CLFLLNIPSGVLGLIGIVGYV), 166 to 186 (IGWVAIDGSLSLAAVALFLVV), 230 to 250 (LVLLLPLPFLLSNLGVTFVVI), and 280 to 300 (FVYSLNYLVVFFALVVVVSLI).

Belongs to the UbiA prenyltransferase family. Protoheme IX farnesyltransferase subfamily. Interacts with CtaA.

The protein resides in the cell membrane. The enzyme catalyses heme b + (2E,6E)-farnesyl diphosphate + H2O = Fe(II)-heme o + diphosphate. The protein operates within porphyrin-containing compound metabolism; heme O biosynthesis; heme O from protoheme: step 1/1. In terms of biological role, converts heme B (protoheme IX) to heme O by substitution of the vinyl group on carbon 2 of heme B porphyrin ring with a hydroxyethyl farnesyl side group. This Staphylococcus epidermidis (strain ATCC 35984 / DSM 28319 / BCRC 17069 / CCUG 31568 / BM 3577 / RP62A) protein is Protoheme IX farnesyltransferase.